The primary structure comprises 128 residues: Small ribosomal subunit protein uS9 (128 aa).

Over residues 97–113 the composition is skewed to basic and acidic residues; the sequence is RSEGFMTRDPRSVERKK. Positions 97–128 are disordered; it reads RSEGFMTRDPRSVERKKPGQPKARRRFQFSKR. A compositionally biased stretch (basic residues) spans 114–128; the sequence is PGQPKARRRFQFSKR.

Belongs to the universal ribosomal protein uS9 family.

The chain is Small ribosomal subunit protein uS9 from Bacteroides fragilis (strain ATCC 25285 / DSM 2151 / CCUG 4856 / JCM 11019 / LMG 10263 / NCTC 9343 / Onslow / VPI 2553 / EN-2).